Here is a 508-residue protein sequence, read N- to C-terminus: Photosystem II CP47 reaction center protein (508 aa).

Transmembrane regions (helical) follow at residues 21–36 (SVHIMHTALVSGWAGS), 101–115 (IMLSGLCFLAAIWHW), 140–156 (GIHLFLAGVACFGFGAF), 203–218 (IAAGTLGILAGLFHLS), 237–252 (VLSSSIAAVFFAAFVV), and 457–472 (SFALLFFFGHIWHGAR).

This sequence belongs to the PsbB/PsbC family. PsbB subfamily. As to quaternary structure, PSII is composed of 1 copy each of membrane proteins PsbA, PsbB, PsbC, PsbD, PsbE, PsbF, PsbH, PsbI, PsbJ, PsbK, PsbL, PsbM, PsbT, PsbX, PsbY, PsbZ, Psb30/Ycf12, at least 3 peripheral proteins of the oxygen-evolving complex and a large number of cofactors. It forms dimeric complexes. The cofactor is Binds multiple chlorophylls. PSII binds additional chlorophylls, carotenoids and specific lipids..

The protein localises to the plastid. The protein resides in the chloroplast thylakoid membrane. Its function is as follows. One of the components of the core complex of photosystem II (PSII). It binds chlorophyll and helps catalyze the primary light-induced photochemical processes of PSII. PSII is a light-driven water:plastoquinone oxidoreductase, using light energy to abstract electrons from H(2)O, generating O(2) and a proton gradient subsequently used for ATP formation. The protein is Photosystem II CP47 reaction center protein of Piper cenocladum (Ant piper).